A 232-amino-acid chain; its full sequence is Ribonuclease 3 (232 aa).

The 123-residue stretch at 9-131 (INLLQKKLGY…IIGGIFLDSN (123 aa)) folds into the RNase III domain. Glu-44 serves as a coordination point for Mg(2+). Asp-48 is a catalytic residue. Residues Asp-117 and Glu-120 each contribute to the Mg(2+) site. Glu-120 is a catalytic residue. The region spanning 158-228 (DPKTRLQEYL…AENALKFLIE (71 aa)) is the DRBM domain.

This sequence belongs to the ribonuclease III family. Homodimer. Mg(2+) serves as cofactor.

The protein resides in the cytoplasm. The enzyme catalyses Endonucleolytic cleavage to 5'-phosphomonoester.. Its function is as follows. Digests double-stranded RNA. Involved in the processing of primary rRNA transcript to yield the immediate precursors to the large and small rRNAs (23S and 16S). Processes some mRNAs, and tRNAs when they are encoded in the rRNA operon. Processes pre-crRNA and tracrRNA of type II CRISPR loci if present in the organism. This Blochmanniella floridana protein is Ribonuclease 3.